Here is a 138-residue protein sequence, read N- to C-terminus: Putative esterase HI_1161 (138 aa).

It belongs to the thioesterase PaaI family.

The polypeptide is Putative esterase HI_1161 (Haemophilus influenzae (strain ATCC 51907 / DSM 11121 / KW20 / Rd)).